A 59-amino-acid polypeptide reads, in one-letter code: Large ribosomal subunit protein bL32 (59 aa).

Residues 1 to 59 (MAVQQNKKSPSKRGMHRSHDFLTTSPLAVEPSTGEVHLRHHISPNGYYRGKKVVKTKND) are disordered. Positions 49–59 (RGKKVVKTKND) are enriched in basic residues.

Belongs to the bacterial ribosomal protein bL32 family.

This is Large ribosomal subunit protein bL32 from Burkholderia mallei (strain NCTC 10247).